A 413-amino-acid polypeptide reads, in one-letter code: Arginine biosynthesis bifunctional protein ArgJ (413 aa).

The substrate site is built by T160, K186, T197, E277, N408, and T413. The active-site Nucleophile is the T197.

This sequence belongs to the ArgJ family. As to quaternary structure, heterotetramer of two alpha and two beta chains.

It is found in the cytoplasm. The catalysed reaction is N(2)-acetyl-L-ornithine + L-glutamate = N-acetyl-L-glutamate + L-ornithine. The enzyme catalyses L-glutamate + acetyl-CoA = N-acetyl-L-glutamate + CoA + H(+). Its pathway is amino-acid biosynthesis; L-arginine biosynthesis; L-ornithine and N-acetyl-L-glutamate from L-glutamate and N(2)-acetyl-L-ornithine (cyclic): step 1/1. It functions in the pathway amino-acid biosynthesis; L-arginine biosynthesis; N(2)-acetyl-L-ornithine from L-glutamate: step 1/4. In terms of biological role, catalyzes two activities which are involved in the cyclic version of arginine biosynthesis: the synthesis of N-acetylglutamate from glutamate and acetyl-CoA as the acetyl donor, and of ornithine by transacetylation between N(2)-acetylornithine and glutamate. This is Arginine biosynthesis bifunctional protein ArgJ from Prochlorococcus marinus (strain SARG / CCMP1375 / SS120).